The sequence spans 390 residues: 8-amino-7-oxononanoate synthase (390 aa).

Residue Arg-19 coordinates substrate. 106-107 (GY) contributes to the pyridoxal 5'-phosphate binding site. His-131 contributes to the substrate binding site. Residues Ser-176, His-204, and Thr-233 each contribute to the pyridoxal 5'-phosphate site. The residue at position 236 (Lys-236) is an N6-(pyridoxal phosphate)lysine. A substrate-binding site is contributed by Thr-350.

Belongs to the class-II pyridoxal-phosphate-dependent aminotransferase family. BioF subfamily. Homodimer. It depends on pyridoxal 5'-phosphate as a cofactor.

The catalysed reaction is 6-carboxyhexanoyl-[ACP] + L-alanine + H(+) = (8S)-8-amino-7-oxononanoate + holo-[ACP] + CO2. The protein operates within cofactor biosynthesis; biotin biosynthesis. In terms of biological role, catalyzes the decarboxylative condensation of pimeloyl-[acyl-carrier protein] and L-alanine to produce 8-amino-7-oxononanoate (AON), [acyl-carrier protein], and carbon dioxide. The protein is 8-amino-7-oxononanoate synthase of Pseudomonas putida (strain W619).